Here is a 235-residue protein sequence, read N- to C-terminus: 7-cyano-7-deazaguanine synthase (235 aa).

ATP is bound at residue 9–19; it reads FSGGQDSTTCL. Zn(2+)-binding residues include cysteine 197, cysteine 212, cysteine 215, and cysteine 218.

This sequence belongs to the QueC family. Zn(2+) serves as cofactor.

It catalyses the reaction 7-carboxy-7-deazaguanine + NH4(+) + ATP = 7-cyano-7-deazaguanine + ADP + phosphate + H2O + H(+). The protein operates within purine metabolism; 7-cyano-7-deazaguanine biosynthesis. Its function is as follows. Catalyzes the ATP-dependent conversion of 7-carboxy-7-deazaguanine (CDG) to 7-cyano-7-deazaguanine (preQ(0)). This chain is 7-cyano-7-deazaguanine synthase, found in Polaromonas sp. (strain JS666 / ATCC BAA-500).